Here is a 356-residue protein sequence, read N- to C-terminus: Guanine nucleotide-binding protein alpha-17 subunit (356 aa).

The N-myristoyl glycine moiety is linked to residue glycine 2. Residue cysteine 4 is the site of S-palmitoyl cysteine attachment. In terms of domain architecture, G-alpha spans 32-356 (SIVKLLLLGA…QKNLQKAGMM (325 aa)). Residues 35-48 (KLLLLGAGECGKST) are G1 motif. Residues 40-47 (GAGECGKS), 177-183 (LYSRVAT), 202-206 (DVGGQ), 271-274 (NKKD), and alanine 328 contribute to the GTP site. Mg(2+)-binding residues include serine 47 and threonine 183. The segment at 175–183 (DILYSRVAT) is G2 motif. The G3 motif stretch occupies residues 198-207 (FRVFDVGGQR). A G4 motif region spans residues 267 to 274 (ILFMNKKD). The G5 motif stretch occupies residues 326–331 (TCATDT).

This sequence belongs to the G-alpha family. G proteins are composed of 3 units; alpha, beta and gamma. The alpha chain contains the guanine nucleotide binding site. In terms of tissue distribution, expressed in sensory neurons in the head and tail. Expressed in amphid AWC neurons, to a lesser extent in AWB and weakly in AWA, ASH and ADF neurons (head sensory neurons). Expressed in phasmid PHA and PHB neurons (tail sensory neurons).

It localises to the cell projection. The protein resides in the cilium. The protein localises to the dendrite. Its function is as follows. Guanine nucleotide-binding proteins (G proteins) are involved as modulators or transducers in various transmembrane signaling systems. This specific G-alpha subunit plays an important role in olfaction and in cilia morphogenesis. Involved in chemotactic responses to attractants diacetyl, pyrazine, 2,4,5-trimethylthiazole, benzaldehyde, isoamyl alcohol, butanone and 2,3-pentanedione. Displays a redundant function with gpa-3 in chemotactic responses. Plays a role in the avoidance response to the noxious chemical quinine in ASH sensory neurons. Involved in avoidance responses to copper, sodium dodecyl sulfate and linoleic acid. Involved in osmotic avoidance and mechanosensory responses. Involved in specifying fan-like morphology of cilia of head sensory neurons AWC. Plays a role in the detection of preferred food sources by mediating the recognition of food odors in olfactory sensory neurons. This chain is Guanine nucleotide-binding protein alpha-17 subunit, found in Caenorhabditis elegans.